Consider the following 376-residue polypeptide: tRNA-specific 2-thiouridylase MnmA (376 aa).

ATP-binding positions include 17–24 and M43; that span reads GMSGGVDS. The interval 103 to 105 is interaction with target base in tRNA; sequence NPD. The active-site Nucleophile is the C108. C108 and C205 are disulfide-bonded. G132 is an ATP binding site. Residues 155 to 157 form an interaction with tRNA region; the sequence is KDQ. Residue C205 is the Cysteine persulfide intermediate of the active site. The interval 315–316 is interaction with tRNA; sequence RY.

It belongs to the MnmA/TRMU family.

It is found in the cytoplasm. The enzyme catalyses S-sulfanyl-L-cysteinyl-[protein] + uridine(34) in tRNA + AH2 + ATP = 2-thiouridine(34) in tRNA + L-cysteinyl-[protein] + A + AMP + diphosphate + H(+). In terms of biological role, catalyzes the 2-thiolation of uridine at the wobble position (U34) of tRNA, leading to the formation of s(2)U34. In Dichelobacter nodosus (strain VCS1703A), this protein is tRNA-specific 2-thiouridylase MnmA.